Here is a 453-residue protein sequence, read N- to C-terminus: 3-phosphoshikimate 1-carboxyvinyltransferase (453 aa).

The disordered stretch occupies residues 1 to 27 (MSHDSEPQPVTATPGGPLNGSLKPPGD). Positions 28, 29, and 33 each coordinate 3-phosphoshikimate. Lys-28 provides a ligand contact to phosphoenolpyruvate. Phosphoenolpyruvate-binding residues include Gly-101 and Arg-129. 3-phosphoshikimate contacts are provided by Ser-175, Gln-177, Asp-330, and Lys-357. Residue Gln-177 participates in phosphoenolpyruvate binding. Asp-330 serves as the catalytic Proton acceptor. Phosphoenolpyruvate-binding residues include Arg-361 and Arg-405.

The protein belongs to the EPSP synthase family. As to quaternary structure, monomer.

The protein resides in the cytoplasm. It catalyses the reaction 3-phosphoshikimate + phosphoenolpyruvate = 5-O-(1-carboxyvinyl)-3-phosphoshikimate + phosphate. Its pathway is metabolic intermediate biosynthesis; chorismate biosynthesis; chorismate from D-erythrose 4-phosphate and phosphoenolpyruvate: step 6/7. In terms of biological role, catalyzes the transfer of the enolpyruvyl moiety of phosphoenolpyruvate (PEP) to the 5-hydroxyl of shikimate-3-phosphate (S3P) to produce enolpyruvyl shikimate-3-phosphate and inorganic phosphate. This chain is 3-phosphoshikimate 1-carboxyvinyltransferase, found in Methylorubrum extorquens (strain CM4 / NCIMB 13688) (Methylobacterium extorquens).